The sequence spans 261 residues: UPF0246 protein PMI0005 (261 aa).

This sequence belongs to the UPF0246 family.

The protein is UPF0246 protein PMI0005 of Proteus mirabilis (strain HI4320).